Reading from the N-terminus, the 1257-residue chain is Stromal processing peptidase, chloroplastic (1257 aa).

The transit peptide at 1–142 directs the protein to the chloroplast; that stretch reads MAASTSTSSL…ASVKRVQLPH (142 aa). A Zn(2+)-binding site is contributed by His-236. Glu-239 acts as the Proton acceptor in catalysis. Zn(2+) is bound at residue His-240. The active site involves Glu-309. Residue Glu-316 participates in Zn(2+) binding. Positions 1233–1257 are disordered; it reads EEAGEGYPGVLPMGRGLSTMTRPTT.

This sequence belongs to the peptidase M16 family. Zn(2+) is required as a cofactor.

It is found in the plastid. Its subcellular location is the chloroplast stroma. Functionally, cleaves presequences (transit peptides) from chloroplastic protein precursors. Initially recognizes a precursor by binding to the C-terminus of its transit peptide and then removes the transit peptide in a single endoproteolytic step. In a next step, pursues the cleavage of transit peptide to a subfragment form. This Pisum sativum (Garden pea) protein is Stromal processing peptidase, chloroplastic.